Reading from the N-terminus, the 729-residue chain is Fatty acid oxidation complex subunit alpha (729 aa).

Residues 1 to 189 are enoyl-CoA hydratase/isomerase; that stretch reads MLYQSETLQL…KVGLVDAVVA (189 aa). Aspartate 296 provides a ligand contact to substrate. Residues 311 to 729 form a 3-hydroxyacyl-CoA dehydrogenase region; that stretch reads SAPKQAAVLG…LLDVSISQPA (419 aa). Residues methionine 324, aspartate 343, 400-402, lysine 407, and serine 429 each bind NAD(+); that span reads VVE. Histidine 450 acts as the For 3-hydroxyacyl-CoA dehydrogenase activity in catalysis. Asparagine 453 provides a ligand contact to NAD(+). Residues asparagine 500 and tyrosine 660 each coordinate substrate.

In the N-terminal section; belongs to the enoyl-CoA hydratase/isomerase family. This sequence in the C-terminal section; belongs to the 3-hydroxyacyl-CoA dehydrogenase family. Heterotetramer of two alpha chains (FadB) and two beta chains (FadA).

The catalysed reaction is a (3S)-3-hydroxyacyl-CoA + NAD(+) = a 3-oxoacyl-CoA + NADH + H(+). It carries out the reaction a (3S)-3-hydroxyacyl-CoA = a (2E)-enoyl-CoA + H2O. It catalyses the reaction a 4-saturated-(3S)-3-hydroxyacyl-CoA = a (3E)-enoyl-CoA + H2O. The enzyme catalyses (3S)-3-hydroxybutanoyl-CoA = (3R)-3-hydroxybutanoyl-CoA. The catalysed reaction is a (3Z)-enoyl-CoA = a 4-saturated (2E)-enoyl-CoA. It carries out the reaction a (3E)-enoyl-CoA = a 4-saturated (2E)-enoyl-CoA. It functions in the pathway lipid metabolism; fatty acid beta-oxidation. In terms of biological role, involved in the aerobic and anaerobic degradation of long-chain fatty acids via beta-oxidation cycle. Catalyzes the formation of 3-oxoacyl-CoA from enoyl-CoA via L-3-hydroxyacyl-CoA. It can also use D-3-hydroxyacyl-CoA and cis-3-enoyl-CoA as substrate. The sequence is that of Fatty acid oxidation complex subunit alpha from Yersinia enterocolitica serotype O:8 / biotype 1B (strain NCTC 13174 / 8081).